Here is a 429-residue protein sequence, read N- to C-terminus: Phosphomethylpyrimidine synthase (429 aa).

Substrate contacts are provided by residues asparagine 66, methionine 94, tyrosine 123, histidine 162, 184–186, 225–228, and glutamate 264; these read SRG and DALR. Residue histidine 268 participates in Zn(2+) binding. Tyrosine 291 provides a ligand contact to substrate. Histidine 332 is a Zn(2+) binding site. Positions 408, 411, and 415 each coordinate [4Fe-4S] cluster.

Belongs to the ThiC family. Requires [4Fe-4S] cluster as cofactor.

It carries out the reaction 5-amino-1-(5-phospho-beta-D-ribosyl)imidazole + S-adenosyl-L-methionine = 4-amino-2-methyl-5-(phosphooxymethyl)pyrimidine + CO + 5'-deoxyadenosine + formate + L-methionine + 3 H(+). It participates in cofactor biosynthesis; thiamine diphosphate biosynthesis. Its function is as follows. Catalyzes the synthesis of the hydroxymethylpyrimidine phosphate (HMP-P) moiety of thiamine from aminoimidazole ribotide (AIR) in a radical S-adenosyl-L-methionine (SAM)-dependent reaction. The polypeptide is Phosphomethylpyrimidine synthase (Sulfurisphaera tokodaii (strain DSM 16993 / JCM 10545 / NBRC 100140 / 7) (Sulfolobus tokodaii)).